A 157-amino-acid polypeptide reads, in one-letter code: UPF0251 protein CLD_3165 (157 aa).

Belongs to the UPF0251 family.

This is UPF0251 protein CLD_3165 from Clostridium botulinum (strain Okra / Type B1).